We begin with the raw amino-acid sequence, 576 residues long: MNIQALLSEKVSQALTAAGAPADSEAQVRQSAKAQFGDYQANGVMAVAKKLGMPPRQLAEKVVQLLALEGIAEKTEIAGPGFINIFLDKQWVASQVENALNAPKLGLTPVEPQTIVIDYSAPNVAKEMHVGHLRSTIIGDAAARTLEFLGHNIIRANHVGDWGTQFGMLIAYLEKMQNESANEMDLSDLEAFYREAKKHYDEDADFAERARGYVVKLQGGDEYCRQMWRKLVDITMTQNQINYERLNVTLTKQDVMGESLYNSMLPNIVADLKAKGLAVESEGATVVFLDEYKNKEGEPMGVIIQKKDGGYLYTTTDIACAKYRYETLNADRVLYYIDSRQHQHLMQAWTIVRKAGYVPDSVSLEHHMFGMMLGKDGKPFKTRAGGTIKLSELLDEAYGRALKLIAEKNPQMESDELAALAKVVSIGAIKYADLSKSRTTDYVFDWDNMLAFEGNTAPYMQYAYTRVASIFKRAGIQEDTLTQPITLNDEREFALATRLLQFEETITSVAREGTPHVMCSYLYDLAGLFSGFYEHCPILNAENDDVRQSRLRLALLTAKTLKQGLDTLGIETVDKM.

Residues 122-132 (PNVAKEMHVGH) carry the 'HIGH' region motif.

Belongs to the class-I aminoacyl-tRNA synthetase family. As to quaternary structure, monomer.

The protein localises to the cytoplasm. The catalysed reaction is tRNA(Arg) + L-arginine + ATP = L-arginyl-tRNA(Arg) + AMP + diphosphate. This chain is Arginine--tRNA ligase, found in Pectobacterium atrosepticum (strain SCRI 1043 / ATCC BAA-672) (Erwinia carotovora subsp. atroseptica).